The primary structure comprises 208 residues: FMN-dependent NADH:quinone oxidoreductase 2 (208 aa).

17 to 19 contacts FMN; that stretch reads SVS.

Belongs to the azoreductase type 1 family. In terms of assembly, homodimer. FMN is required as a cofactor.

It carries out the reaction 2 a quinone + NADH + H(+) = 2 a 1,4-benzosemiquinone + NAD(+). It catalyses the reaction N,N-dimethyl-1,4-phenylenediamine + anthranilate + 2 NAD(+) = 2-(4-dimethylaminophenyl)diazenylbenzoate + 2 NADH + 2 H(+). Quinone reductase that provides resistance to thiol-specific stress caused by electrophilic quinones. In terms of biological role, also exhibits azoreductase activity. Catalyzes the reductive cleavage of the azo bond in aromatic azo compounds to the corresponding amines. This Halalkalibacterium halodurans (strain ATCC BAA-125 / DSM 18197 / FERM 7344 / JCM 9153 / C-125) (Bacillus halodurans) protein is FMN-dependent NADH:quinone oxidoreductase 2.